A 398-amino-acid polypeptide reads, in one-letter code: Acetate kinase (398 aa).

Asparagine 10 is a binding site for Mg(2+). Lysine 17 is an ATP binding site. Substrate is bound at residue arginine 91. Catalysis depends on aspartate 148, which acts as the Proton donor/acceptor. Residues 208 to 212, 283 to 285, and 331 to 335 each bind ATP; these read HLGNG, DCR, and GIGEN. Residue glutamate 385 participates in Mg(2+) binding.

The protein belongs to the acetokinase family. As to quaternary structure, homodimer. Mg(2+) serves as cofactor. Mn(2+) is required as a cofactor.

The protein resides in the cytoplasm. It carries out the reaction acetate + ATP = acetyl phosphate + ADP. Its pathway is metabolic intermediate biosynthesis; acetyl-CoA biosynthesis; acetyl-CoA from acetate: step 1/2. Its function is as follows. Catalyzes the formation of acetyl phosphate from acetate and ATP. Can also catalyze the reverse reaction. This is Acetate kinase from Shewanella woodyi (strain ATCC 51908 / MS32).